The chain runs to 147 residues: Siroheme decarboxylase NirG subunit (147 aa).

It belongs to the Ahb/Nir family. Probably forms a complex composed of NirD, NirL, NirG and NirH. All proteins are required for the total conversion of siroheme to didecarboxysiroheme.

It catalyses the reaction siroheme + 2 H(+) = 12,18-didecarboxysiroheme + 2 CO2. Its pathway is porphyrin-containing compound metabolism. Involved in heme d1 biosynthesis. Catalyzes the decarboxylation of siroheme into didecarboxysiroheme. In Pseudomonas aeruginosa (strain ATCC 15692 / DSM 22644 / CIP 104116 / JCM 14847 / LMG 12228 / 1C / PRS 101 / PAO1), this protein is Siroheme decarboxylase NirG subunit.